Here is a 93-residue protein sequence, read N- to C-terminus: Small ribosomal subunit protein uS15 (93 aa).

The protein belongs to the universal ribosomal protein uS15 family. Part of the 30S ribosomal subunit. Forms a bridge to the 50S subunit in the 70S ribosome, contacting the 23S rRNA.

In terms of biological role, one of the primary rRNA binding proteins, it binds directly to 16S rRNA where it helps nucleate assembly of the platform of the 30S subunit by binding and bridging several RNA helices of the 16S rRNA. Its function is as follows. Forms an intersubunit bridge (bridge B4) with the 23S rRNA of the 50S subunit in the ribosome. In Ehrlichia chaffeensis (strain ATCC CRL-10679 / Arkansas), this protein is Small ribosomal subunit protein uS15.